A 465-amino-acid chain; its full sequence is Gamma-aminobutyric acid receptor subunit gamma-1 (465 aa).

Positions 1–35 are cleaved as a signal peptide; sequence MGPLKAFLFSPFLLRSQSRGVRLVFLLLTLHLGNC. Topologically, residues 36 to 273 are extracellular; sequence VDKADDEDDE…FDLSRRMGYF (238 aa). Residues asparagine 50 and asparagine 127 are each glycosylated (N-linked (GlcNAc...) asparagine). The cysteines at positions 188 and 202 are disulfide-linked. A glycan (N-linked (GlcNAc...) asparagine) is linked at asparagine 245. Residues 274–294 form a helical membrane-spanning segment; sequence TIQTYIPCILTVVLSWVSFWI. Residues 295-300 are Cytoplasmic-facing; it reads NKDAVP. A helical membrane pass occupies residues 301 to 320; that stretch reads ARTSLGITTVLTMTTLSTIA. Topologically, residues 321 to 328 are extracellular; sequence RKSLPKVS. A helical membrane pass occupies residues 329–349; that stretch reads YVTAMDLFVSVCFIFVFAALM. At 350–444 the chain is on the cytoplasmic side; the sequence is EYGTLHYFTS…RIAKIDSYSR (95 aa). The chain crosses the membrane as a helical span at residues 445–465; sequence IFFPTAFALFNLVYWVGYLYL.

It belongs to the ligand-gated ion channel (TC 1.A.9) family. Gamma-aminobutyric acid receptor (TC 1.A.9.5) subfamily. GABRG1 sub-subfamily. In terms of assembly, heteropentamer, formed by a combination of alpha (GABRA1-6), beta (GABRB1-3), gamma (GABRG1-3), delta (GABRD), epsilon (GABRE), rho (GABRR1-3), pi (GABRP) and theta (GABRQ) chains, each subunit exhibiting distinct physiological and pharmacological properties. Post-translationally, may be palmitoylated.

The protein resides in the postsynaptic cell membrane. It is found in the cell membrane. It catalyses the reaction chloride(in) = chloride(out). Its function is as follows. Gamma subunit of the heteropentameric ligand-gated chloride channel gated by gamma-aminobutyric acid (GABA), a major inhibitory neurotransmitter in the brain. GABA-gated chloride channels, also named GABA(A) receptors (GABAAR), consist of five subunits arranged around a central pore and contain GABA active binding site(s) located at the alpha and beta subunit interface(s). When activated by GABA, GABAARs selectively allow the flow of chloride anions across the cell membrane down their electrochemical gradient. Chloride influx into the postsynaptic neuron following GABAAR opening decreases the neuron ability to generate a new action potential, thereby reducing nerve transmission. The chain is Gamma-aminobutyric acid receptor subunit gamma-1 from Homo sapiens (Human).